We begin with the raw amino-acid sequence, 205 residues long: Protein GrpE (205 aa).

Basic and acidic residues predominate over residues 1–18; that stretch reads MSEEVKNSVETEENKASK. Residues 1-60 are disordered; it reads MSEEVKNSVETEENKASKDNATQAPNPTENHNTAQETEKAENSEKTESATQENESLDKLK. Positions 19 to 35 are enriched in polar residues; sequence DNATQAPNPTENHNTAQ. The segment covering 36 to 47 has biased composition (basic and acidic residues); that stretch reads ETEKAENSEKTE.

This sequence belongs to the GrpE family. In terms of assembly, homodimer.

It is found in the cytoplasm. Its function is as follows. Participates actively in the response to hyperosmotic and heat shock by preventing the aggregation of stress-denatured proteins, in association with DnaK and GrpE. It is the nucleotide exchange factor for DnaK and may function as a thermosensor. Unfolded proteins bind initially to DnaJ; upon interaction with the DnaJ-bound protein, DnaK hydrolyzes its bound ATP, resulting in the formation of a stable complex. GrpE releases ADP from DnaK; ATP binding to DnaK triggers the release of the substrate protein, thus completing the reaction cycle. Several rounds of ATP-dependent interactions between DnaJ, DnaK and GrpE are required for fully efficient folding. The protein is Protein GrpE of Chloroherpeton thalassium (strain ATCC 35110 / GB-78).